Here is a 1460-residue protein sequence, read N- to C-terminus: Cilia- and flagella-associated protein 43 (1460 aa).

9 WD repeats span residues 46 to 87, 91 to 132, 184 to 221, 303 to 342, 428 to 468, 529 to 569, 589 to 628, 911 to 951, and 1129 to 1170; these read EGRY…HLQC, VATV…RLVK, SKGHYFHSCVWGTEGLYCGAGRGQVVLLDELRTDMKNY, RRRSASDTVKLLVLGGLVVIVCLDGSLVTYDQDTNTAGHT, IFAC…DSAS, MRDH…MKLP, FGRGGITCLSVWNAAGGFVCGGNDSVVHLVPVGKSPIHYS, EIDP…VTEV, and NRRF…CRAV. Coiled-coil stretches lie at residues 1170–1214 and 1399–1446; these read VVEA…AEEA and LGEH…LREA.

Belongs to the CFAP43 family.

It is found in the cell projection. The protein localises to the cilium. It localises to the flagellum. Its subcellular location is the cytoplasm. The protein resides in the cytoskeleton. It is found in the flagellum axoneme. Its function is as follows. Flagellar protein involved in flagellum axoneme organization and function. The chain is Cilia- and flagella-associated protein 43 from Trypanosoma brucei brucei (strain 927/4 GUTat10.1).